A 208-amino-acid polypeptide reads, in one-letter code: FMN-dependent NADH:quinone oxidoreductase (208 aa).

99-102 contributes to the FMN binding site; that stretch reads MWNF.

The protein belongs to the azoreductase type 1 family. In terms of assembly, homodimer. FMN is required as a cofactor.

The enzyme catalyses 2 a quinone + NADH + H(+) = 2 a 1,4-benzosemiquinone + NAD(+). The catalysed reaction is N,N-dimethyl-1,4-phenylenediamine + anthranilate + 2 NAD(+) = 2-(4-dimethylaminophenyl)diazenylbenzoate + 2 NADH + 2 H(+). Functionally, quinone reductase that provides resistance to thiol-specific stress caused by electrophilic quinones. Its function is as follows. Also exhibits azoreductase activity. Catalyzes the reductive cleavage of the azo bond in aromatic azo compounds to the corresponding amines. The sequence is that of FMN-dependent NADH:quinone oxidoreductase from Brevibacillus brevis (strain 47 / JCM 6285 / NBRC 100599).